Reading from the N-terminus, the 188-residue chain is MMSTSSDAQLDPVEFIHSRIRTVPNWPQPGVMFRDITPLLQSAKAMRVLVDLFVERYVDAKLDYIAGLDARGFIIAPIVAYELSVGFVPIRKVGKLPYKTQRESYALEYGTATVEIHEDACKPGDRVVIVDDLIATGGTMMAGKNLLDRLGAVVVEGAAIVDLPDLGGSALLRGAGLSLYTVTEFAGH.

The protein belongs to the purine/pyrimidine phosphoribosyltransferase family. Homodimer.

It is found in the cytoplasm. The enzyme catalyses AMP + diphosphate = 5-phospho-alpha-D-ribose 1-diphosphate + adenine. It functions in the pathway purine metabolism; AMP biosynthesis via salvage pathway; AMP from adenine: step 1/1. In terms of biological role, catalyzes a salvage reaction resulting in the formation of AMP, that is energically less costly than de novo synthesis. The protein is Adenine phosphoribosyltransferase of Burkholderia thailandensis (strain ATCC 700388 / DSM 13276 / CCUG 48851 / CIP 106301 / E264).